A 322-amino-acid polypeptide reads, in one-letter code: NADH-quinone oxidoreductase subunit H (322 aa).

The next 8 membrane-spanning stretches (helical) occupy residues 15-35 (ILHITLIIIFIIFFAATLSIL), 82-102 (IFILSPIIAFVSLLLVIPTIP), 114-134 (IGILFFLMMASLSVYAVLFAG), 149-169 (ASAQTLSYEVFLGLSLMGVIA), 186-206 (VWNVIPQFFGFLCFFIAGIAL), 243-263 (ISIITVSALISTVFFGGYFGF), 265-285 (GSSFFWLFLKTVFFILIFILI), and 302-322 (WKICLPLTLLNLIITAFFILI).

This sequence belongs to the complex I subunit 1 family. In terms of assembly, NDH-1 is composed of 13 different subunits. Subunits NuoA, H, J, K, L, M, N constitute the membrane sector of the complex.

The protein resides in the cell membrane. The enzyme catalyses a quinone + NADH + 5 H(+)(in) = a quinol + NAD(+) + 4 H(+)(out). Its function is as follows. NDH-1 shuttles electrons from NADH, via FMN and iron-sulfur (Fe-S) centers, to quinones in the respiratory chain. The immediate electron acceptor for the enzyme in this species is believed to be ubiquinone. Couples the redox reaction to proton translocation (for every two electrons transferred, four hydrogen ions are translocated across the cytoplasmic membrane), and thus conserves the redox energy in a proton gradient. This subunit may bind ubiquinone. The sequence is that of NADH-quinone oxidoreductase subunit H from Buchnera aphidicola subsp. Schizaphis graminum (strain Sg).